A 346-amino-acid polypeptide reads, in one-letter code: Elongation factor Ts (346 aa).

Residues 80–83 (TDFV) are involved in Mg(2+) ion dislocation from EF-Tu.

This sequence belongs to the EF-Ts family.

It is found in the cytoplasm. In terms of biological role, associates with the EF-Tu.GDP complex and induces the exchange of GDP to GTP. It remains bound to the aminoacyl-tRNA.EF-Tu.GTP complex up to the GTP hydrolysis stage on the ribosome. This Streptococcus pneumoniae serotype 19F (strain G54) protein is Elongation factor Ts.